Reading from the N-terminus, the 314-residue chain is Olfactory receptor 4Q2 (314 aa).

Residues 1–26 (MDKNQTEVMREFFLSGFSQTPSIEAG) are Extracellular-facing. N-linked (GlcNAc...) asparagine glycosylation occurs at N4. Residues 27-47 (LFVLFLFFYMSIWVGNVLIMV) form a helical membrane-spanning segment. Residues 48 to 61 (TVASDKYLNSSPMY) are Cytoplasmic-facing. Residues 62-84 (FLLGNLSFLDLCYSTVTTPKLLA) traverse the membrane as a helical segment. The Extracellular portion of the chain corresponds to 85–98 (DFFNHEKLISYDQC). C98 and C181 form a disulfide bridge. A helical transmembrane segment spans residues 99–119 (IVQLFFLHFVGAAEMFLLTVM). The Cytoplasmic portion of the chain corresponds to 120 to 142 (AYDRYVAICRPLHYTTVMSRGLC). Residues 143–163 (CVLVAASWMGGFVHSTVQTIL) form a helical membrane-spanning segment. Topologically, residues 164–196 (TVHLPFCGPNQVENTFFCDVPPVIKLACADTFV) are extracellular. Residues 197–217 (IELLMVSNSGLISTISFVVLI) form a helical membrane-spanning segment. The Cytoplasmic portion of the chain corresponds to 218-236 (SSYTTILVKIRSKEGRRKA). A helical transmembrane segment spans residues 237–257 (LSTCASHLMVVTLFFGPCIFI). Residues 258 to 268 (YARPFSTFSVD) lie on the Extracellular side of the membrane. The chain crosses the membrane as a helical span at residues 269-289 (KMVSVLYNVITPMLNPLIYTL). The Cytoplasmic portion of the chain corresponds to 290–314 (RNKEVKSAMQKLWVRNGLTWKKQET).

Belongs to the G-protein coupled receptor 1 family.

It is found in the cell membrane. In terms of biological role, odorant receptor. This Homo sapiens (Human) protein is Olfactory receptor 4Q2 (OR4Q2).